The chain runs to 313 residues: Porphobilinogen deaminase (313 aa).

Cysteine 241 is modified (S-(dipyrrolylmethanemethyl)cysteine).

It belongs to the HMBS family. In terms of assembly, monomer. It depends on dipyrromethane as a cofactor.

The enzyme catalyses 4 porphobilinogen + H2O = hydroxymethylbilane + 4 NH4(+). It participates in porphyrin-containing compound metabolism; protoporphyrin-IX biosynthesis; coproporphyrinogen-III from 5-aminolevulinate: step 2/4. In terms of biological role, tetrapolymerization of the monopyrrole PBG into the hydroxymethylbilane pre-uroporphyrinogen in several discrete steps. This chain is Porphobilinogen deaminase, found in Sulfurimonas denitrificans (strain ATCC 33889 / DSM 1251) (Thiomicrospira denitrificans (strain ATCC 33889 / DSM 1251)).